The chain runs to 214 residues: MPDFKIVISDPQSVEPKRIKVKAKANDQIKSIAGEKEGKAVPQAKVNEKTKQLLNIDTLITLEITKQEGDKKVKVKSHFKVEVDNNVPDNEVWISKTMAEKFGAEDFEAIAYRTKTLQISIDQDKATNLVGLKIGDTFEANQLIGLPVKLKITGGSDNSGFPMRFDVTGAAKRKILLSGPPGFYPNEDGERRRKTIRGNTISQEIVQINTIIVR.

Belongs to the eukaryotic ribosomal protein eS6 family.

This Saccharolobus islandicus (strain Y.G.57.14 / Yellowstone #1) (Sulfolobus islandicus) protein is Small ribosomal subunit protein eS6 (rps6e).